Here is an 89-residue protein sequence, read N- to C-terminus: Small ribosomal subunit protein uS14B (89 aa).

The interval 38–61 (KLPKDAHPSRLKLRDQTDGRPRGY) is disordered. Residues 39 to 58 (LPKDAHPSRLKLRDQTDGRP) show a composition bias toward basic and acidic residues.

Belongs to the universal ribosomal protein uS14 family. Part of the 30S ribosomal subunit. Contacts proteins S3 and S10.

In terms of biological role, binds 16S rRNA, required for the assembly of 30S particles and may also be responsible for determining the conformation of the 16S rRNA at the A site. This is Small ribosomal subunit protein uS14B from Enterococcus faecalis (strain ATCC 700802 / V583).